The primary structure comprises 441 residues: Probable tRNA pseudouridine synthase D (441 aa).

D89 serves as the catalytic Nucleophile. The 226-residue stretch at 168 to 393 folds into the TRUD domain; sequence GVPNFFGVQR…SKGTRREVLL (226 aa).

Belongs to the pseudouridine synthase TruD family.

The enzyme catalyses uridine(13) in tRNA = pseudouridine(13) in tRNA. Could be responsible for synthesis of pseudouridine from uracil-13 in transfer RNAs. The sequence is that of Probable tRNA pseudouridine synthase D from Methanosarcina acetivorans (strain ATCC 35395 / DSM 2834 / JCM 12185 / C2A).